A 179-amino-acid polypeptide reads, in one-letter code: ATP synthase subunit delta (179 aa).

The protein belongs to the ATPase delta chain family. F-type ATPases have 2 components, F(1) - the catalytic core - and F(0) - the membrane proton channel. F(1) has five subunits: alpha(3), beta(3), gamma(1), delta(1), epsilon(1). F(0) has three main subunits: a(1), b(2) and c(10-14). The alpha and beta chains form an alternating ring which encloses part of the gamma chain. F(1) is attached to F(0) by a central stalk formed by the gamma and epsilon chains, while a peripheral stalk is formed by the delta and b chains.

The protein localises to the cell inner membrane. Functionally, f(1)F(0) ATP synthase produces ATP from ADP in the presence of a proton or sodium gradient. F-type ATPases consist of two structural domains, F(1) containing the extramembraneous catalytic core and F(0) containing the membrane proton channel, linked together by a central stalk and a peripheral stalk. During catalysis, ATP synthesis in the catalytic domain of F(1) is coupled via a rotary mechanism of the central stalk subunits to proton translocation. Its function is as follows. This protein is part of the stalk that links CF(0) to CF(1). It either transmits conformational changes from CF(0) to CF(1) or is implicated in proton conduction. The chain is ATP synthase subunit delta from Paraburkholderia phymatum (strain DSM 17167 / CIP 108236 / LMG 21445 / STM815) (Burkholderia phymatum).